Consider the following 516-residue polypeptide: Acyl-lipid (7-3)-desaturase, chloroplastic (516 aa).

The tract at residues 1 to 25 (MNATMQRSAVAGRTSGKVATTARAS) is disordered. The transit peptide at 1–47 (MNATMQRSAVAGRTSGKVATTARASSMARPRLPIAGRVARRSAVTVR) directs the protein to the chloroplast. Residues 83 to 148 (WTVYRGVAYD…LADFPVDAVP (66 aa)) form the Cytochrome b5 heme-binding domain. Positions 100 and 123 each coordinate heme. 2 helical membrane-spanning segments follow: residues 186–206 (GAAF…TYDA) and 209–229 (LTGA…QHCG). The Histidine box-1 motif lies at 227–231 (HCGNH). The Histidine box-2 signature appears at 262-267 (HQVSHH). A run of 4 helical transmembrane segments spans residues 305–325 (MWAL…QALL), 354–374 (FLLY…GGAA), 375–395 (GYLF…HNVP), and 423–443 (VLTS…GLNL). The short motif at 444-448 (QIEHH) is the Histidine box-3 element.

It belongs to the fatty acid desaturase type 1 family. Requires Fe(2+) as cofactor.

Its subcellular location is the plastid. The protein localises to the chloroplast membrane. It catalyses the reaction a (7Z,10Z,13Z,16Z,19Z)-docosapentaenoyl-containing glycerolipid + 2 Fe(II)-[cytochrome b5] + O2 + 2 H(+) = a (4Z,7Z,10Z,13Z,16Z,19Z)-docosahexaenoyl-containing glycerolipid + 2 Fe(III)-[cytochrome b5] + 2 H2O. The enzyme catalyses a (7Z,10Z,13Z,16Z)-docosatetraenoyl-containing glycerolipid + 2 Fe(II)-[cytochrome b5] + O2 + 2 H(+) = a (4Z,7Z,10Z,13Z,16Z)-docosapentaenoyl-containing glycerolipid + 2 Fe(III)-[cytochrome b5] + 2 H2O. Its function is as follows. Fatty acid desaturase that introduces a cis double bond at the 4-position in 16-carbon polyunsaturated fatty acids that contain a Delta(7) double bond, resulting in the production of 16 carbon fatty acid (7Z,10Z,13Z)-hexadeca-7,10,13-trienoate. This is Acyl-lipid (7-3)-desaturase, chloroplastic from Chlamydomonas reinhardtii (Chlamydomonas smithii).